Reading from the N-terminus, the 470-residue chain is Histidine--tRNA ligase (470 aa).

It belongs to the class-II aminoacyl-tRNA synthetase family. Homodimer.

It is found in the cytoplasm. The enzyme catalyses tRNA(His) + L-histidine + ATP = L-histidyl-tRNA(His) + AMP + diphosphate + H(+). This is Histidine--tRNA ligase from Xanthomonas oryzae pv. oryzae (strain PXO99A).